A 371-amino-acid polypeptide reads, in one-letter code: tRNA-specific 2-thiouridylase MnmA (371 aa).

Residues 24-31 and Leu50 each bind ATP; that span reads AMSGGVDS. Catalysis depends on Cys119, which acts as the Nucleophile. A disulfide bridge connects residues Cys119 and Cys215. Gly143 contributes to the ATP binding site. The tract at residues 165–167 is interaction with tRNA; sequence KDQ. Cys215 (cysteine persulfide intermediate) is an active-site residue.

Belongs to the MnmA/TRMU family.

Its subcellular location is the cytoplasm. It carries out the reaction S-sulfanyl-L-cysteinyl-[protein] + uridine(34) in tRNA + AH2 + ATP = 2-thiouridine(34) in tRNA + L-cysteinyl-[protein] + A + AMP + diphosphate + H(+). Catalyzes the 2-thiolation of uridine at the wobble position (U34) of tRNA, leading to the formation of s(2)U34. The sequence is that of tRNA-specific 2-thiouridylase MnmA from Neorickettsia sennetsu (strain ATCC VR-367 / Miyayama) (Ehrlichia sennetsu).